The chain runs to 560 residues: Diphtheria toxin homolog CRM228 (560 aa).

Residues 1–25 form the signal peptide; sequence MSRKLFASILIGALLGIGAPPSAHA. NAD(+) is bound by residues histidine 46 and tyrosine 90. Glutamate 173 is an active-site residue. Disulfide bonds link cysteine 211–cysteine 226 and cysteine 486–cysteine 496.

The polypeptide is Diphtheria toxin homolog CRM228 (Corynebacterium diphtheriae).